The chain runs to 329 residues: MTRTDFAQSAVASIFTGAIASHAAVLADDLGLFDALAKGKLRNRDLDRSPWLRNRIRISGALEALCRVGAVQRCTDGYELTDVGTELAGQVPVFRLWLGGYASVLAGQISIGADPATGVHGGIVAESSGAIGARYLDETIVNLLESLRPEGRICDIGCGTGARLLRVCRRVNQPGIGYDLSAKAVEAARETVDEARRIGVDIDVRQGDATALTQDHPDVDIVTQAFMTHHIAPDEYCAAVLRSYRSRFPRARYLVIFDTVPSQDSEEPEIFAPGFDYIHALQNMEPRSRGAARRMFTEAGYICREEVELAVPNSYAWVLEMRDREGPAS.

Belongs to the methyltransferase superfamily.

The catalysed reaction is indole-3-pyruvate + S-adenosyl-L-methionine = (R)-3-(indol-3-yl)-2-oxobutanoate + S-adenosyl-L-homocysteine + H(+). Its activity is regulated as follows. Strongly inhibited by the thiol reagents p-chloromercuribenzoate and N-ethylmaleimide. Partially inhibited by o-phenanthroline and 2,2'-dipyridyl. Competitively inhibited by L-tryptophan and indolmycin. Functionally, involved in the biosynthesis of the antibiotic indolmycin, an inhibitor of the bacterial tryptophan-tRNA synthetases. Catalyzes the transfer of a methyl group from S-adenosyl-L-methionine to position 3 of the aliphatic side chain of (indol-3-yl)pyruvate to yield 3-methylindolepyruvate. The sequence is that of Indolepyruvate C-methyltransferase from Streptomyces griseus.